Reading from the N-terminus, the 633-residue chain is Acetylcholinesterase (633 aa).

Positions 1-23 (MKILDALLFPVIFIMFFIHLSIA) are cleaved as a signal peptide. Cysteine 91 and cysteine 118 are joined by a disulfide. Asparagine 133 and asparagine 184 each carry an N-linked (GlcNAc...) asparagine glycan. Catalysis depends on serine 225, which acts as the Acyl-ester intermediate. Cysteine 279 and cysteine 290 form a disulfide bridge. Asparagine 283 carries an N-linked (GlcNAc...) asparagine glycan. Glutamate 352 acts as the Charge relay system in catalysis. N-linked (GlcNAc...) asparagine glycosylation occurs at asparagine 368. Cysteine 427 and cysteine 579 are oxidised to a cystine. Residue histidine 494 is the Charge relay system of the active site. N-linked (GlcNAc...) asparagine glycosylation is found at asparagine 511 and asparagine 591.

Belongs to the type-B carboxylesterase/lipase family.

It is found in the synapse. The protein localises to the secreted. The protein resides in the cell membrane. It catalyses the reaction acetylcholine + H2O = choline + acetate + H(+). Its function is as follows. Terminates signal transduction at the neuromuscular junction by rapid hydrolysis of the acetylcholine released into the synaptic cleft. In Electrophorus electricus (Electric eel), this protein is Acetylcholinesterase (ache).